The following is a 96-amino-acid chain: Co-chaperonin GroES (96 aa).

This sequence belongs to the GroES chaperonin family. In terms of assembly, heptamer of 7 subunits arranged in a ring. Interacts with the chaperonin GroEL.

The protein resides in the cytoplasm. Together with the chaperonin GroEL, plays an essential role in assisting protein folding. The GroEL-GroES system forms a nano-cage that allows encapsulation of the non-native substrate proteins and provides a physical environment optimized to promote and accelerate protein folding. GroES binds to the apical surface of the GroEL ring, thereby capping the opening of the GroEL channel. The chain is Co-chaperonin GroES from Acidithiobacillus ferrooxidans (strain ATCC 23270 / DSM 14882 / CIP 104768 / NCIMB 8455) (Ferrobacillus ferrooxidans (strain ATCC 23270)).